The sequence spans 317 residues: MMQRAPQPIACLLGPTASGKTAAALAFAARAPVEIVSVDSALVYREMDIGTAKPSSEERAVAPHHLIDIVDPVDAYSAADFRADALRLVGEIEARGNVPLLVGGTMLYYKALTQGLNDLPAADPEVRATLDADAAREGWPALHARLAAVDAVTAARLAPNDSQRIQRALEVFMLTGQPMSALLAAPARSDDLAKGYRFVPIALEPSDRSVLHARIAQRFDAMLAKGFIDEVRRLRARGDLHPGLPAMRCVGYRQAWEYLDGETDYDTMRDKGVFATRQLCKRQLTWLRAMPERIVVDCCAGDAAGLALQAIERVIAG.

An ATP-binding site is contributed by 14–21; that stretch reads GPTASGKT. Position 16–21 (16–21) interacts with substrate; it reads TASGKT. Interaction with substrate tRNA stretches follow at residues 39 to 42, 163 to 167, and 248 to 253; these read DSAL, QRIQR, and RCVGYR.

It belongs to the IPP transferase family. Monomer. Requires Mg(2+) as cofactor.

It catalyses the reaction adenosine(37) in tRNA + dimethylallyl diphosphate = N(6)-dimethylallyladenosine(37) in tRNA + diphosphate. Catalyzes the transfer of a dimethylallyl group onto the adenine at position 37 in tRNAs that read codons beginning with uridine, leading to the formation of N6-(dimethylallyl)adenosine (i(6)A). The protein is tRNA dimethylallyltransferase of Paraburkholderia phymatum (strain DSM 17167 / CIP 108236 / LMG 21445 / STM815) (Burkholderia phymatum).